The chain runs to 410 residues: Arginine biosynthesis bifunctional protein ArgJ (410 aa).

Residues T158, K184, T195, E282, N405, and T410 each contribute to the substrate site. Residue T195 is the Nucleophile of the active site.

Belongs to the ArgJ family. Heterotetramer of two alpha and two beta chains.

It is found in the cytoplasm. The enzyme catalyses N(2)-acetyl-L-ornithine + L-glutamate = N-acetyl-L-glutamate + L-ornithine. The catalysed reaction is L-glutamate + acetyl-CoA = N-acetyl-L-glutamate + CoA + H(+). It functions in the pathway amino-acid biosynthesis; L-arginine biosynthesis; L-ornithine and N-acetyl-L-glutamate from L-glutamate and N(2)-acetyl-L-ornithine (cyclic): step 1/1. The protein operates within amino-acid biosynthesis; L-arginine biosynthesis; N(2)-acetyl-L-ornithine from L-glutamate: step 1/4. Functionally, catalyzes two activities which are involved in the cyclic version of arginine biosynthesis: the synthesis of N-acetylglutamate from glutamate and acetyl-CoA as the acetyl donor, and of ornithine by transacetylation between N(2)-acetylornithine and glutamate. This chain is Arginine biosynthesis bifunctional protein ArgJ, found in Rhodopirellula baltica (strain DSM 10527 / NCIMB 13988 / SH1).